The primary structure comprises 211 residues: ATP phosphoribosyltransferase (211 aa).

This sequence belongs to the ATP phosphoribosyltransferase family. Short subfamily. As to quaternary structure, heteromultimer composed of HisG and HisZ subunits.

Its subcellular location is the cytoplasm. It catalyses the reaction 1-(5-phospho-beta-D-ribosyl)-ATP + diphosphate = 5-phospho-alpha-D-ribose 1-diphosphate + ATP. It functions in the pathway amino-acid biosynthesis; L-histidine biosynthesis; L-histidine from 5-phospho-alpha-D-ribose 1-diphosphate: step 1/9. Catalyzes the condensation of ATP and 5-phosphoribose 1-diphosphate to form N'-(5'-phosphoribosyl)-ATP (PR-ATP). Has a crucial role in the pathway because the rate of histidine biosynthesis seems to be controlled primarily by regulation of HisG enzymatic activity. The chain is ATP phosphoribosyltransferase from Pseudomonas putida (strain ATCC 700007 / DSM 6899 / JCM 31910 / BCRC 17059 / LMG 24140 / F1).